The chain runs to 247 residues: 3-deoxy-manno-octulosonate cytidylyltransferase (247 aa).

This sequence belongs to the KdsB family.

Its subcellular location is the cytoplasm. It catalyses the reaction 3-deoxy-alpha-D-manno-oct-2-ulosonate + CTP = CMP-3-deoxy-beta-D-manno-octulosonate + diphosphate. Its pathway is nucleotide-sugar biosynthesis; CMP-3-deoxy-D-manno-octulosonate biosynthesis; CMP-3-deoxy-D-manno-octulosonate from 3-deoxy-D-manno-octulosonate and CTP: step 1/1. It participates in bacterial outer membrane biogenesis; lipopolysaccharide biosynthesis. Its function is as follows. Activates KDO (a required 8-carbon sugar) for incorporation into bacterial lipopolysaccharide in Gram-negative bacteria. The sequence is that of 3-deoxy-manno-octulosonate cytidylyltransferase from Chlorobium phaeobacteroides (strain DSM 266 / SMG 266 / 2430).